Reading from the N-terminus, the 498-residue chain is NAD(P)H-quinone oxidoreductase chain 4, chloroplastic (498 aa).

14 helical membrane passes run 4–24, 37–57, 80–100, 112–129, 134–154, 167–187, 208–228, 242–262, 272–292, 305–325, 330–350, 386–406, 416–436, and 463–483; these read FPWL…IVLF, YCIC…HFEL, FGID…TTLA, KLFY…LGTF, ILLF…LLSM, FILY…GMSL, ALEI…SPII, HYST…YGLV, AHSI…IYAA, IAYS…SISE, GAIL…FLAG, LALP…GIIT, ILIT…SLSI, and FISI…DFIF.

Belongs to the complex I subunit 4 family.

The protein localises to the plastid. The protein resides in the chloroplast thylakoid membrane. The enzyme catalyses a plastoquinone + NADH + (n+1) H(+)(in) = a plastoquinol + NAD(+) + n H(+)(out). The catalysed reaction is a plastoquinone + NADPH + (n+1) H(+)(in) = a plastoquinol + NADP(+) + n H(+)(out). The sequence is that of NAD(P)H-quinone oxidoreductase chain 4, chloroplastic from Phaseolus vulgaris (Kidney bean).